Reading from the N-terminus, the 396-residue chain is Protein BOP3 (396 aa).

Disordered regions lie at residues 1–22 (MSTF…NNVN), 98–126 (GVPA…ENLP), 145–168 (PTPM…GISH), 203–239 (VARR…KFTN), 254–274 (RDQQ…QQDL), and 355–396 (REGR…LNST). Polar residues-rich tracts occupy residues 111–124 (QPHN…SSEN), 159–168 (ASSSTGGISH), and 210–230 (GTKS…SRNL). Positions 355-369 (REGRQVHDDLDDRTC) are enriched in basic and acidic residues. Polar residues predominate over residues 370–396 (SESSSRNESPVRTITKDNSVGKILNST).

The protein resides in the cytoplasm. It localises to the nucleus. Involved in resistance to methylmercury. Overexpression suppresses a PAM1-SLV3 double null mutation. The protein is Protein BOP3 (BOP3) of Saccharomyces cerevisiae (strain ATCC 204508 / S288c) (Baker's yeast).